Consider the following 105-residue polypeptide: Transcription factor S (105 aa).

8 residues coordinate Zn(2+): Cys5, Cys8, Cys21, Cys24, Cys66, Cys69, Cys94, and Cys97. The C4-type zinc-finger motif lies at Cys5–Cys24. The TFIIS-type zinc finger occupies Thr62–Arg102.

Belongs to the archaeal RpoM/eukaryotic RPA12/RPB9/RPC11 RNA polymerase family.

Its function is as follows. Induces RNA cleavage activity in the RNA polymerase. In its presence, the cleavage activity of the RNA polymerase truncates the RNA back to position +15 in a stepwise manner by releasing mainly dinucleotides from the 3'-end of the nascent RNA. The truncated RNAs are able to continue elongation. Involved in transcriptional proofreading and fidelity. Misincorporation of nucleotides during elongation of transcription leads to arrested elongation complexes which are rescued by TFS-promoted removal of a dinucleotide from the 3'-end. TFS is able to induce a cleavage resynthesis cycle in stalled elongation complexes (resulting from the next missing nucleotide or a reduced incorporation rate of a wrong nucleotide) preventing misincorporation and enabling proofreading in a post-incorporation manner. Pausing of elongation complexes is the main determinant of TFS-induced RNA cleavage. This chain is Transcription factor S, found in Methanothermococcus thermolithotrophicus (Methanococcus thermolithotrophicus).